A 365-amino-acid chain; its full sequence is N5-carboxyaminoimidazole ribonucleotide synthase (365 aa).

ATP contacts are provided by residues Arg93, Lys132, 137–143, 168–171, Glu176, His199, and 249–250; these read GYDGKGQ, EEFV, and NE. The ATP-grasp domain occupies 97–279; that stretch reads KLFLKKHGFP…QFENLLRAIT (183 aa).

This sequence belongs to the PurK/PurT family. In terms of assembly, homodimer.

It catalyses the reaction 5-amino-1-(5-phospho-beta-D-ribosyl)imidazole + hydrogencarbonate + ATP = 5-carboxyamino-1-(5-phospho-D-ribosyl)imidazole + ADP + phosphate + 2 H(+). Its pathway is purine metabolism; IMP biosynthesis via de novo pathway; 5-amino-1-(5-phospho-D-ribosyl)imidazole-4-carboxylate from 5-amino-1-(5-phospho-D-ribosyl)imidazole (N5-CAIR route): step 1/2. Catalyzes the ATP-dependent conversion of 5-aminoimidazole ribonucleotide (AIR) and HCO(3)(-) to N5-carboxyaminoimidazole ribonucleotide (N5-CAIR). In Aquifex aeolicus (strain VF5), this protein is N5-carboxyaminoimidazole ribonucleotide synthase.